The chain runs to 165 residues: Mediator of RNA polymerase II transcription subunit 10 (165 aa).

Disordered regions lie at residues 54–81 and 143–165; these read SLHT…DPAL and LRGE…RERG. Positions 62-77 are enriched in polar residues; sequence TASTTAPNQYQSTNPN.

This sequence belongs to the Mediator complex subunit 10 family. In terms of assembly, component of the Mediator complex.

It is found in the nucleus. Functionally, component of the Mediator complex, a coactivator involved in the regulated transcription of nearly all RNA polymerase II-dependent genes. Mediator functions as a bridge to convey information from gene-specific regulatory proteins to the basal RNA polymerase II transcription machinery. Mediator is recruited to promoters by direct interactions with regulatory proteins and serves as a scaffold for the assembly of a functional preinitiation complex with RNA polymerase II and the general transcription factors. In Emericella nidulans (strain FGSC A4 / ATCC 38163 / CBS 112.46 / NRRL 194 / M139) (Aspergillus nidulans), this protein is Mediator of RNA polymerase II transcription subunit 10 (nut2).